Reading from the N-terminus, the 120-residue chain is U-scoloptoxin(16)-Er2a (120 aa).

The signal sequence occupies residues 1 to 26 (MNTVSVVQFLAVGCAVFVLYGRGVFA).

The protein belongs to the scoloptoxin-16 family. Contains 4 disulfide bonds. In terms of tissue distribution, expressed by the venom gland.

It localises to the secreted. This chain is U-scoloptoxin(16)-Er2a, found in Ethmostigmus rubripes (Giant centipede).